A 156-amino-acid chain; its full sequence is 6,7-dimethyl-8-ribityllumazine synthase (156 aa).

Residues Phe-22, 57–59 (AYE), and 81–83 (TVI) each bind 5-amino-6-(D-ribitylamino)uracil. 86–87 (GT) contacts (2S)-2-hydroxy-3-oxobutyl phosphate. His-89 (proton donor) is an active-site residue. Phe-114 lines the 5-amino-6-(D-ribitylamino)uracil pocket. Arg-128 serves as a coordination point for (2S)-2-hydroxy-3-oxobutyl phosphate.

This sequence belongs to the DMRL synthase family. In terms of assembly, forms an icosahedral capsid composed of 60 subunits, arranged as a dodecamer of pentamers.

It carries out the reaction (2S)-2-hydroxy-3-oxobutyl phosphate + 5-amino-6-(D-ribitylamino)uracil = 6,7-dimethyl-8-(1-D-ribityl)lumazine + phosphate + 2 H2O + H(+). Its pathway is cofactor biosynthesis; riboflavin biosynthesis; riboflavin from 2-hydroxy-3-oxobutyl phosphate and 5-amino-6-(D-ribitylamino)uracil: step 1/2. In terms of biological role, catalyzes the formation of 6,7-dimethyl-8-ribityllumazine by condensation of 5-amino-6-(D-ribitylamino)uracil with 3,4-dihydroxy-2-butanone 4-phosphate. This is the penultimate step in the biosynthesis of riboflavin. In Salmonella agona (strain SL483), this protein is 6,7-dimethyl-8-ribityllumazine synthase.